The following is a 119-amino-acid chain: Large ribosomal subunit protein uL22 (119 aa).

This sequence belongs to the universal ribosomal protein uL22 family. Part of the 50S ribosomal subunit.

In terms of biological role, this protein binds specifically to 23S rRNA; its binding is stimulated by other ribosomal proteins, e.g. L4, L17, and L20. It is important during the early stages of 50S assembly. It makes multiple contacts with different domains of the 23S rRNA in the assembled 50S subunit and ribosome. Functionally, the globular domain of the protein is located near the polypeptide exit tunnel on the outside of the subunit, while an extended beta-hairpin is found that lines the wall of the exit tunnel in the center of the 70S ribosome. In Chlorobaculum tepidum (strain ATCC 49652 / DSM 12025 / NBRC 103806 / TLS) (Chlorobium tepidum), this protein is Large ribosomal subunit protein uL22.